The primary structure comprises 534 residues: Apolipoprotein N-acyltransferase (534 aa).

7 helical membrane-spanning segments follow: residues 8–28 (VILV…AFAV), 31–51 (LPPF…VWLI), 69–89 (AFAV…WWLG), 105–125 (LAIL…VALA), 127–147 (IFWS…GLME), 178–198 (VIGA…PALF), and 208–228 (VALA…ALYL). In terms of domain architecture, CN hydrolase spans 246–496 (VQPDIDQAAK…TGFIDATVDS (251 aa)). Residue glutamate 291 is the Proton acceptor of the active site. Lysine 355 is a catalytic residue. Catalysis depends on cysteine 408, which acts as the Nucleophile. The helical transmembrane segment at 511–531 (FWLTEALLILIALISREGFIF) threads the bilayer.

This sequence belongs to the CN hydrolase family. Apolipoprotein N-acyltransferase subfamily.

It localises to the cell inner membrane. It catalyses the reaction N-terminal S-1,2-diacyl-sn-glyceryl-L-cysteinyl-[lipoprotein] + a glycerophospholipid = N-acyl-S-1,2-diacyl-sn-glyceryl-L-cysteinyl-[lipoprotein] + a 2-acyl-sn-glycero-3-phospholipid + H(+). The protein operates within protein modification; lipoprotein biosynthesis (N-acyl transfer). Functionally, catalyzes the phospholipid dependent N-acylation of the N-terminal cysteine of apolipoprotein, the last step in lipoprotein maturation. In Rhizobium etli (strain CIAT 652), this protein is Apolipoprotein N-acyltransferase.